A 226-amino-acid polypeptide reads, in one-letter code: Phosphatidylserine decarboxylase proenzyme (226 aa).

The Schiff-base intermediate with substrate; via pyruvic acid role is filled by Ser-184. Position 184 is a pyruvic acid (Ser); by autocatalysis (Ser-184).

This sequence belongs to the phosphatidylserine decarboxylase family. PSD-A subfamily. Heterodimer of a large membrane-associated beta subunit and a small pyruvoyl-containing alpha subunit. Pyruvate serves as cofactor. Is synthesized initially as an inactive proenzyme. Formation of the active enzyme involves a self-maturation process in which the active site pyruvoyl group is generated from an internal serine residue via an autocatalytic post-translational modification. Two non-identical subunits are generated from the proenzyme in this reaction, and the pyruvate is formed at the N-terminus of the alpha chain, which is derived from the carboxyl end of the proenzyme. The post-translation cleavage follows an unusual pathway, termed non-hydrolytic serinolysis, in which the side chain hydroxyl group of the serine supplies its oxygen atom to form the C-terminus of the beta chain, while the remainder of the serine residue undergoes an oxidative deamination to produce ammonia and the pyruvoyl prosthetic group on the alpha chain.

It is found in the cell membrane. It catalyses the reaction a 1,2-diacyl-sn-glycero-3-phospho-L-serine + H(+) = a 1,2-diacyl-sn-glycero-3-phosphoethanolamine + CO2. Its pathway is phospholipid metabolism; phosphatidylethanolamine biosynthesis; phosphatidylethanolamine from CDP-diacylglycerol: step 2/2. In terms of biological role, catalyzes the formation of phosphatidylethanolamine (PtdEtn) from phosphatidylserine (PtdSer). This chain is Phosphatidylserine decarboxylase proenzyme, found in Ehrlichia canis (strain Jake).